A 699-amino-acid chain; its full sequence is Protein STRUBBELIG-RECEPTOR FAMILY 5 (699 aa).

An N-terminal signal peptide occupies residues 1-22 (MTQKLVRLVIVSLAITVTLLQA). Topologically, residues 23–273 (KTDNQEVSAL…DGGGITAGTG (251 aa)) are extracellular. 5 LRR repeats span residues 93–115 (SLTT…LPPN), 116–136 (IANL…SLSQ), 139–161 (NLQS…FQKL), 163–186 (KLET…ANLT), and 187–209 (SLKK…RNLA). Asn-184 carries N-linked (GlcNAc...) asparagine glycosylation. Residues 239-263 (NDWSTETAPPPPPGVKYGRKSSGSK) form a disordered region. The chain crosses the membrane as a helical span at residues 274-294 (MVIAGACLGVLVLIIVLIALV). Topologically, residues 295–699 (SKKKSSLSPH…SYRAHDDYDY (405 aa)) are cytoplasmic. At Ser-368 the chain carries Phosphoserine. In terms of domain architecture, Protein kinase spans 404–675 (FSPGNLLGEG…SEVVEALVRM (272 aa)). ATP contacts are provided by residues 410 to 418 (LGEGSIGRV) and Lys-432.

The protein belongs to the protein kinase superfamily. Ser/Thr protein kinase family. In terms of tissue distribution, expressed in leaves and flowers.

The protein localises to the membrane. In Arabidopsis thaliana (Mouse-ear cress), this protein is Protein STRUBBELIG-RECEPTOR FAMILY 5 (SRF5).